The chain runs to 418 residues: MTAHTNSPRILVIGTGDTKSDELLFMADVIERAGGSPVMIDVSILGNPPYEPAYSKHDVAEAAGTTVQAIIDSGDEHSAMALMAEGATALVRGLSQRGQVDGMIALGGSLGTDLALDIAAILPLGVPKFIVSTIAYSHLLPPERIAPDLMMILWAGGLYGLNPICRSVLSQACGAVVGAAKLVEKPSAEKPLIGMTSLGSSCLKYMRFLKPELEKRGYDVAIFHATGMGGRAYEAVAAQKGFVAVFDFCIQEVTNAESGSVVTSGPDRMENAERAGIPQIIAPGAVDMVDMPAWQNVPEQFRDRPYHAHNRLIASITVSPEQRRAVARVVAAKLERAAAPVAFILPTGGVQERDRNGEPLHEPEALGAFLDEMRGAVSGTITFEEVDAHINAPEFASRALAVFDRWVAEGIVVKGNVA.

It belongs to the UPF0261 family.

The polypeptide is UPF0261 protein BRA1168/BS1330_II1159 (Brucella suis biovar 1 (strain 1330)).